Here is a 46-residue protein sequence, read N- to C-terminus: Protein YpdJ (46 aa).

In terms of biological role, may be involved in H(2) production during fermentative growth. The sequence is that of Protein YpdJ (ypdJ) from Escherichia coli (strain K12).